Reading from the N-terminus, the 283-residue chain is Large ribosomal subunit protein mL46 (283 aa).

K217 is subject to N6-succinyllysine. N6-acetyllysine is present on K228. The residue at position 246 (K246) is an N6-succinyllysine.

Belongs to the mitochondrion-specific ribosomal protein mL46 family. Component of the mitochondrial ribosome large subunit (39S) which comprises a 16S rRNA and about 50 distinct proteins.

Its subcellular location is the mitochondrion. The polypeptide is Large ribosomal subunit protein mL46 (Mrpl46) (Mus musculus (Mouse)).